A 161-amino-acid chain; its full sequence is Allophycocyanin subunit alpha-B (161 aa).

N4-methylasparagine is present on Asn-71. A (2R,3E)-phycocyanobilin-binding site is contributed by Cys-81.

It belongs to the phycobiliprotein family. As to quaternary structure, heterohexamer of two alpha chains, one alpha-B chain and three beta chains. In terms of processing, contains one covalently linked bilin chromophore.

It is found in the cellular thylakoid membrane. Functionally, light-harvesting photosynthetic bile pigment-protein from the phycobiliprotein complex. Allophycocyanin has a maximum absorption at approximately 654 nanometers. The polypeptide is Allophycocyanin subunit alpha-B (apcD) (Synechocystis sp. (strain ATCC 27184 / PCC 6803 / Kazusa)).